A 428-amino-acid polypeptide reads, in one-letter code: Adenylosuccinate synthetase (428 aa).

GTP is bound by residues 12 to 18 (GDEGKGK) and 40 to 42 (GHT). The active-site Proton acceptor is the D13. 2 residues coordinate Mg(2+): D13 and G40. IMP is bound by residues 13–16 (DEGK), 38–41 (NAGH), T129, R143, Q224, T239, and R303. H41 serves as the catalytic Proton donor. 299 to 305 (VTTGRIR) provides a ligand contact to substrate. Residues R305, 331-333 (KVD), and 410-412 (AYG) contribute to the GTP site.

It belongs to the adenylosuccinate synthetase family. As to quaternary structure, homodimer. Mg(2+) is required as a cofactor.

The protein resides in the cytoplasm. It carries out the reaction IMP + L-aspartate + GTP = N(6)-(1,2-dicarboxyethyl)-AMP + GDP + phosphate + 2 H(+). Its pathway is purine metabolism; AMP biosynthesis via de novo pathway; AMP from IMP: step 1/2. In terms of biological role, plays an important role in the de novo pathway of purine nucleotide biosynthesis. Catalyzes the first committed step in the biosynthesis of AMP from IMP. The protein is Adenylosuccinate synthetase of Francisella tularensis subsp. mediasiatica (strain FSC147).